Reading from the N-terminus, the 337-residue chain is Nucleoid-associated protein PBPRA2585 (337 aa).

It belongs to the YejK family.

The protein localises to the cytoplasm. It localises to the nucleoid. The polypeptide is Nucleoid-associated protein PBPRA2585 (Photobacterium profundum (strain SS9)).